A 388-amino-acid chain; its full sequence is Chorismate synthase (388 aa).

2 residues coordinate NADP(+): arginine 39 and arginine 45. Residues 130–132, 251–252, glycine 296, 311–315, and arginine 337 contribute to the FMN site; these read RSS, NA, and KPIPT.

It belongs to the chorismate synthase family. As to quaternary structure, homotetramer. The cofactor is FMNH2.

It carries out the reaction 5-O-(1-carboxyvinyl)-3-phosphoshikimate = chorismate + phosphate. Its pathway is metabolic intermediate biosynthesis; chorismate biosynthesis; chorismate from D-erythrose 4-phosphate and phosphoenolpyruvate: step 7/7. Its function is as follows. Catalyzes the anti-1,4-elimination of the C-3 phosphate and the C-6 proR hydrogen from 5-enolpyruvylshikimate-3-phosphate (EPSP) to yield chorismate, which is the branch point compound that serves as the starting substrate for the three terminal pathways of aromatic amino acid biosynthesis. This reaction introduces a second double bond into the aromatic ring system. The protein is Chorismate synthase of Geobacillus kaustophilus (strain HTA426).